The following is a 418-amino-acid chain: Glutamyl-tRNA reductase (418 aa).

Substrate is bound by residues 49-52 (TCNR), Ser109, 114-116 (EPQ), and Gln120. The active-site Nucleophile is Cys50. Residue 189 to 194 (GAGETI) participates in NADP(+) binding.

This sequence belongs to the glutamyl-tRNA reductase family. In terms of assembly, homodimer.

The catalysed reaction is (S)-4-amino-5-oxopentanoate + tRNA(Glu) + NADP(+) = L-glutamyl-tRNA(Glu) + NADPH + H(+). It participates in porphyrin-containing compound metabolism; protoporphyrin-IX biosynthesis; 5-aminolevulinate from L-glutamyl-tRNA(Glu): step 1/2. Catalyzes the NADPH-dependent reduction of glutamyl-tRNA(Glu) to glutamate 1-semialdehyde (GSA). This chain is Glutamyl-tRNA reductase, found in Escherichia coli O157:H7.